Consider the following 568-residue polypeptide: MSVRYSSSKQYSSSRSGGGGGGGGGSSFRISSSKGSIGGGFSSGGFSGGSFSRGSSGGGCFGGSSGGYGGLGGGFGGGNFGGGYGSSSFGGGYGGVSFGGGSFGGGSFGGGGFSGGSFGGYGGGYGGDGGLLSGNEKVTMQNLNDRLASYLDKVRALEESNYELEGKIKEWYEKHGNSSQRAPRDYSKYYQTIEDLKNQILNLTTDNANILLQIDNARLAADDFRLKYENEVALRQSVEADINGLRRVLDELTLTKADLEMQIESLTEELAYLKKNHEEEMRDLQNVSTGDVNVEMNAAPGVDLTELLNNMRNQYEQLAEQNRKDAEAWFNEKSKELTTEINSNIEQMSSHKSEITELRRTVQGLEIELQSQLALKQSLEGSLAETEGRYCVQLSQIQAQISSLEEQLQQIRAETECQNAEYQQLLDIKIRLENEIQTYRSLLEGEGSSGGGGYGGGRGGGSSGGGYGGSSGGGYGGSSGGGGYGGGSSGGGGHIGGHSGGHSGSSGGGYGGGSSSGGGGYGGGSSGGGGSHGGSSGGGYGGGSSSSGGHKSSSSGSVGESSSKGPRY.

The span at 1-15 shows a compositional bias: low complexity; that stretch reads MSVRYSSSKQYSSSR. The interval 1–31 is disordered; it reads MSVRYSSSKQYSSSRSGGGGGGGGGSSFRIS. The interval 1–135 is head; the sequence is MSVRYSSSKQ…GGDGGLLSGN (135 aa). 6 positions are modified to phosphoserine: Ser14, Ser16, Ser36, Ser47, Ser50, and Ser160. A compositionally biased stretch (gly residues) spans 16 to 26; it reads SGGGGGGGGGS. The coil 1A stretch occupies residues 136–171; the sequence is EKVTMQNLNDRLASYLDKVRALEESNYELEGKIKEW. The 315-residue stretch at 136–450 folds into the IF rod domain; that stretch reads EKVTMQNLND…SLLEGEGSSG (315 aa). The segment at 172–192 is linker 1; sequence YEKHGNSSQRAPRDYSKYYQT. The tract at residues 193–284 is coil 1B; sequence IEDLKNQILN…KNHEEEMRDL (92 aa). Residues 285–307 form a linker 12 region; sequence QNVSTGDVNVEMNAAPGVDLTEL. Positions 308-446 are coil 2; sequence LNNMRNQYEQ…QTYRSLLEGE (139 aa). The tail stretch occupies residues 447–568; sequence GSSGGGGYGG…GESSSKGPRY (122 aa). Gly residues predominate over residues 485 to 546; it reads GGGSSGGGGH…GGGYGGGSSS (62 aa). A disordered region spans residues 485 to 568; it reads GGGSSGGGGH…GESSSKGPRY (84 aa). Residues 547–568 are compositionally biased toward low complexity; that stretch reads SGGHKSSSSGSVGESSSKGPRY.

Belongs to the intermediate filament family. As to quaternary structure, heterotetramer of two type I and two type II keratins. Heterodimer with KRT1. Two heterodimers of KRT1 and KRT10 form a heterotetramer. The KRT10 subunit in the heterotetramer is probably disulfide-linked. Expressed in skin.

It is found in the secreted. The protein resides in the extracellular space. Its subcellular location is the cell surface. The protein localises to the cytoplasm. Functionally, plays a role in the establishment of the epidermal barrier on plantar skin. Involved in the maintenance of cell layer development and keratin filament bundles in suprabasal cells of the epithelium. The polypeptide is Keratin, type I cytoskeletal 10 (Canis lupus familiaris (Dog)).